A 181-amino-acid chain; its full sequence is ATP synthase subunit delta (181 aa).

This sequence belongs to the ATPase delta chain family. In terms of assembly, F-type ATPases have 2 components, F(1) - the catalytic core - and F(0) - the membrane proton channel. F(1) has five subunits: alpha(3), beta(3), gamma(1), delta(1), epsilon(1). F(0) has three main subunits: a(1), b(2) and c(10-14). The alpha and beta chains form an alternating ring which encloses part of the gamma chain. F(1) is attached to F(0) by a central stalk formed by the gamma and epsilon chains, while a peripheral stalk is formed by the delta and b chains.

It localises to the cell inner membrane. F(1)F(0) ATP synthase produces ATP from ADP in the presence of a proton or sodium gradient. F-type ATPases consist of two structural domains, F(1) containing the extramembraneous catalytic core and F(0) containing the membrane proton channel, linked together by a central stalk and a peripheral stalk. During catalysis, ATP synthesis in the catalytic domain of F(1) is coupled via a rotary mechanism of the central stalk subunits to proton translocation. Functionally, this protein is part of the stalk that links CF(0) to CF(1). It either transmits conformational changes from CF(0) to CF(1) or is implicated in proton conduction. The sequence is that of ATP synthase subunit delta from Desulfotalea psychrophila (strain LSv54 / DSM 12343).